The primary structure comprises 157 residues: UPF0225 protein Psyr_3863 (157 aa).

The protein belongs to the UPF0225 family.

The sequence is that of UPF0225 protein Psyr_3863 from Pseudomonas syringae pv. syringae (strain B728a).